The sequence spans 135 residues: Large ribosomal subunit protein uL22c (135 aa).

This sequence belongs to the universal ribosomal protein uL22 family. As to quaternary structure, part of the 50S ribosomal subunit.

The protein localises to the plastid. In terms of biological role, this protein binds specifically to 23S rRNA. Its function is as follows. The globular domain of the protein is located near the polypeptide exit tunnel on the outside of the subunit, while an extended beta-hairpin is found that lines the wall of the exit tunnel in the center of the 70S ribosome. The protein is Large ribosomal subunit protein uL22c (rpl22) of Cuscuta reflexa (Southern Asian dodder).